Consider the following 330-residue polypeptide: uncharacterized protein (330 aa).

10 helical membrane-spanning segments follow: residues 27 to 47 (MGAYVSLAAAMAIVGSSVVVG), 56 to 76 (VFLSSGLRFLIASVVLLMLLF), 90 to 110 (VFVLLVQSFTGVFLFSICLLY), 119 to 139 (ESGILTSTTPMLIGILSFFLL), 147 to 167 (TLIGILLAVCGVMAINLFGAG), 176 to 196 (LFGNMLIIAAVIGEALFTLMA), 206 to 226 (LAISTFVSLFGFLFFLPFALF), 243 to 263 (YVLYYALFVTVLAFYLWYSGV), 270 to 290 (VSGIFTSVLPVSAVILSGVIL), and 294 to 314 (FEFVHFIGIACVIGGIFVTVI). EamA domains are found at residues 38–163 (AIVG…AINL) and 187–314 (IGEA…VTVI).

It belongs to the EamA transporter family.

Its subcellular location is the cell membrane. This is an uncharacterized protein from Bacillus subtilis (strain 168).